Reading from the N-terminus, the 89-residue chain is Small ribosomal subunit protein uS14A (89 aa).

It belongs to the universal ribosomal protein uS14 family. Part of the 30S ribosomal subunit. Contacts proteins S3 and S10.

Functionally, binds 16S rRNA, required for the assembly of 30S particles and may also be responsible for determining the conformation of the 16S rRNA at the A site. This is Small ribosomal subunit protein uS14A from Ligilactobacillus salivarius (strain UCC118) (Lactobacillus salivarius).